Here is a 1223-residue protein sequence, read N- to C-terminus: DNA-directed RNA polymerase subunit beta' (1223 aa).

Zn(2+) contacts are provided by C60, C62, C75, and C78. 3 residues coordinate Mg(2+): D449, D451, and D453. Zn(2+)-binding residues include C818, C892, C899, and C902.

This sequence belongs to the RNA polymerase beta' chain family. In terms of assembly, the RNAP catalytic core consists of 2 alpha, 1 beta, 1 beta' and 1 omega subunit. When a sigma factor is associated with the core the holoenzyme is formed, which can initiate transcription. The cofactor is Mg(2+). Requires Zn(2+) as cofactor.

The enzyme catalyses RNA(n) + a ribonucleoside 5'-triphosphate = RNA(n+1) + diphosphate. DNA-dependent RNA polymerase catalyzes the transcription of DNA into RNA using the four ribonucleoside triphosphates as substrates. The protein is DNA-directed RNA polymerase subunit beta' of Lactobacillus gasseri (strain ATCC 33323 / DSM 20243 / BCRC 14619 / CIP 102991 / JCM 1131 / KCTC 3163 / NCIMB 11718 / NCTC 13722 / AM63).